The primary structure comprises 320 residues: uncharacterized protein (320 aa).

A disordered region spans residues 1–40; the sequence is MDHPSTSSLPRKKVKAGVKKAGKKTGKKTTGKKKTTPSAI. Residues 10 to 35 show a composition bias toward basic residues; the sequence is PRKKVKAGVKKAGKKTGKKTTGKKKT. Residues 51–71 form a helical membrane-spanning segment; sequence LLVLLAVLSYLAALSLGLYIM. Residues Asn92, Asn122, Asn154, and Asn167 are each glycosylated (N-linked (GlcNAc...) asparagine). The next 2 membrane-spanning stretches (helical) occupy residues 186 to 206 and 216 to 236; these read PLVH…AMTG and MLVT…VTVL. The N-linked (GlcNAc...) asparagine glycan is linked to Asn247. The helical transmembrane segment at 272 to 292 threads the bilayer; it reads VQGALVAIVAVFYLTMGVVFV.

The protein resides in the membrane. It functions in the pathway secondary metabolite biosynthesis; terpenoid biosynthesis. Part of the gene cluster that mediates the biosynthesis of an ophiobolin family sesterterpenoid. This is an uncharacterized protein from Aspergillus terreus.